The primary structure comprises 338 residues: uncharacterized protein (338 aa).

Residues 1–29 (MIKQLCKNITICTLALSTTFTVLPATSFA) form the signal peptide.

This sequence belongs to the aerolysin family.

This is an uncharacterized protein from Staphylococcus aureus (strain USA300).